The following is a 146-amino-acid chain: Large-conductance mechanosensitive channel (146 aa).

The next 2 helical transmembrane spans lie at valine 14–leucine 34 and glycine 81–valine 101.

Belongs to the MscL family. As to quaternary structure, homopentamer.

The protein localises to the cell membrane. Channel that opens in response to stretch forces in the membrane lipid bilayer. May participate in the regulation of osmotic pressure changes within the cell. This is Large-conductance mechanosensitive channel from Symbiobacterium thermophilum (strain DSM 24528 / JCM 14929 / IAM 14863 / T).